Reading from the N-terminus, the 442-residue chain is Trigger factor (442 aa).

In terms of domain architecture, PPIase FKBP-type spans 175–258 (GDFISISLHV…VNAVIEVSIP (84 aa)).

This sequence belongs to the FKBP-type PPIase family. Tig subfamily.

The protein resides in the cytoplasm. It catalyses the reaction [protein]-peptidylproline (omega=180) = [protein]-peptidylproline (omega=0). Its function is as follows. Involved in protein export. Acts as a chaperone by maintaining the newly synthesized protein in an open conformation. Functions as a peptidyl-prolyl cis-trans isomerase. The protein is Trigger factor (tig) of Chlamydia pneumoniae (Chlamydophila pneumoniae).